The sequence spans 738 residues: AP-4 complex subunit beta-1 (738 aa).

The segment at 534–600 (CSPKSDPSLG…NASFATSGHL (67 aa)) is hinge. Residues 601–738 (ISEENKEGAQ…VIGTVGDIKS (138 aa)) form an ear; mediates interaction with TEPSIN region.

Belongs to the adaptor complexes large subunit family. Adaptor protein complex 4 (AP-4) is a heterotetramer composed of two large adaptins (epsilon-type subunit AP4E1 and beta-type subunit AP4B1), a medium adaptin (mu-type subunit AP4M1) and a small adaptin (sigma-type AP4S1). Interacts with TEPSIN; this interaction requires the presence of a functional AP-4 complex. Interacts with GRIA2; probably indirect it mediates the somatodendritic localization of GRIA2 in neurons.

Its subcellular location is the golgi apparatus. It is found in the trans-Golgi network membrane. Functionally, component of the adaptor protein complex 4 (AP-4). Adaptor protein complexes are vesicle coat components involved both in vesicle formation and cargo selection. They control the vesicular transport of proteins in different trafficking pathways. AP-4 forms a non clathrin-associated coat on vesicles departing the trans-Golgi network (TGN) and may be involved in the targeting of proteins from the trans-Golgi network (TGN) to the endosomal-lysosomal system. It is also involved in protein sorting to the basolateral membrane in epithelial cells and the proper asymmetric localization of somatodendritic proteins in neurons. AP-4 is involved in the recognition and binding of tyrosine-based sorting signals found in the cytoplasmic part of cargos, but may also recognize other types of sorting signal. This is AP-4 complex subunit beta-1 from Mus musculus (Mouse).